Here is an 86-residue protein sequence, read N- to C-terminus: Apolipoprotein C-I (86 aa).

The first 26 residues, 1 to 26, serve as a signal peptide directing secretion; it reads MRLFLSLPVLVVVLLMILEGPGPAQG.

It belongs to the apolipoprotein C1 family.

The protein localises to the secreted. Inhibitor of lipoprotein binding to the low density lipoprotein (LDL) receptor, LDL receptor-related protein, and very low density lipoprotein (VLDL) receptor. Associates with high density lipoproteins (HDL) and the triacylglycerol-rich lipoproteins in the plasma and makes up about 10% of the protein of the VLDL and 2% of that of HDL. Appears to interfere directly with fatty acid uptake and is also the major plasma inhibitor of cholesteryl ester transfer protein (CETP). Binds free fatty acids and reduces their intracellular esterification. Modulates the interaction of APOE with beta-migrating VLDL and inhibits binding of beta-VLDL to the LDL receptor-related protein. This Ateles geoffroyi (Black-handed spider monkey) protein is Apolipoprotein C-I (APOC1).